Here is a 300-residue protein sequence, read N- to C-terminus: Glutamyl-Q tRNA(Asp) synthetase (300 aa).

Residues 14-18 (RFAPT) and E50 each bind L-glutamate. Residues 17–27 (PTPSGFLHFGS) carry the 'HIGH' region motif. Residues C106, C108, Y120, and C124 each coordinate Zn(2+). Y177 and R195 together coordinate L-glutamate. A 'KMSKS' region motif is present at residues 233–237 (KLGKS). K236 serves as a coordination point for ATP.

It belongs to the class-I aminoacyl-tRNA synthetase family. GluQ subfamily. It depends on Zn(2+) as a cofactor.

Functionally, catalyzes the tRNA-independent activation of glutamate in presence of ATP and the subsequent transfer of glutamate onto a tRNA(Asp). Glutamate is transferred on the 2-amino-5-(4,5-dihydroxy-2-cyclopenten-1-yl) moiety of the queuosine in the wobble position of the QUC anticodon. The sequence is that of Glutamyl-Q tRNA(Asp) synthetase from Pseudomonas putida (strain ATCC 700007 / DSM 6899 / JCM 31910 / BCRC 17059 / LMG 24140 / F1).